A 633-amino-acid polypeptide reads, in one-letter code: MANQVNGNAVQLKEEEEPMDTSSVTHTEHYKTLIEAGLPQKVAERLDEIFQTGLVAYVDLDERAIDALREFNEEGALSVLQQFKESDLSHVQNKSAFLCGVMKTYRQREKQGSKVQESTKGPDEAKIKALLERTGYTLDVTTGQRKYGGPPPDSVYSGVQPGIGTEVFVGKIPRDLYEDELVPLFEKAGPIWDLRLMMDPLSGQNRGYAFITFCGKEAAQEAVKLCDSYEIRPGKHLGVCISVANNRLFVGSIPKNKTKENILEEFSKVTEGLVDVILYHQPDDKKKNRGFCFLEYEDHKSAAQARRRLMSGKVKVWGNVVTVEWADPVEEPDPEVMAKVKVLFVRNLATTVTEEILEKSFSEFGKLERVKKLKDYAFVHFEDRGAAVKAMDEMNGKEIEGEEIEIVLAKPPDKKRKERQAARQASRSTAYEDYYYHPPPRMPPPIRGRGRGGGRGGYGYPPDYYGYEDYYDDYYGYDYHDYRGGYEDPYYGYDDGYAVRGRGGGRGGRGAPPPPRGRGAPPPRGRAGYSQRGAPLGPPRGSRGGRGGPAQQQRGRGSRGSRGNRGGNVGGKRKADGYNQPDSKRRQTNNQQNWGSQPIAQQPLQQGGDYSGNYGYNNDNQEFYQDTYGQQWK.

The tract at residues 1–24 (MANQVNGNAVQLKEEEEPMDTSSV) is disordered. Alanine 2 carries the N-acetylalanine modification. Residues lysine 13 and lysine 171 each participate in a glycyl lysine isopeptide (Lys-Gly) (interchain with G-Cter in SUMO2) cross-link. 3 RRM domains span residues 165–244 (TEVF…ISVA), 246–328 (NRLF…WADP), and 341–411 (KVLF…LAKP). Residue lysine 359 forms a Glycyl lysine isopeptide (Lys-Gly) (interchain with G-Cter in SUMO2) linkage. Residue lysine 366 is modified to N6-acetyllysine. A Nuclear localization signal motif is present at residues 412 to 418 (PDKKRKE). A disordered region spans residues 412-456 (PDKKRKERQAARQASRSTAYEDYYYHPPPRMPPPIRGRGRGGGRG). The span at 437–446 (HPPPRMPPPI) shows a compositional bias: pro residues. Positions 447–567 (RGRGRGGGRG…SRGSRGNRGG (121 aa)) are RNA-binding RGG-box. The stretch at 462–471 (PDYYGYEDYY) is one 1; approximate repeat. The interval 462–497 (PDYYGYEDYYDDYYGYDYHDYRGGYEDPYYGYDDGY) is 3 X 11 AA approximate repeats of D-D-Y-Y-G-Y-D-Y-H-D-Y. Repeat unit 2 spans residues 472-482 (DDYYGYDYHDY). The stretch at 488 to 497 (DPYYGYDDGY) is one 3; approximate repeat. Positions 501-510 (GRGGGRGGRG) are enriched in gly residues. Positions 501–633 (GRGGGRGGRG…YQDTYGQQWK (133 aa)) are disordered. Residues 511–524 (APPPPRGRGAPPPR) show a composition bias toward pro residues. A compositionally biased stretch (low complexity) spans 525 to 541 (GRAGYSQRGAPLGPPRG). Positions 558–570 (SRGSRGNRGGNVG) are enriched in gly residues. A compositionally biased stretch (polar residues) spans 588 to 604 (TNNQQNWGSQPIAQQPL). Residues 605–621 (QQGGDYSGNYGYNNDNQ) are compositionally biased toward low complexity. A compositionally biased stretch (polar residues) spans 622-633 (EFYQDTYGQQWK).

As to quaternary structure, identified in the spliceosome C complex. Identified in a IGF2BP1-dependent mRNP granule complex containing untranslated mRNAs. Interacts with GTPBP1.

The protein localises to the nucleus. The protein resides in the microsome. It localises to the nucleoplasm. Its subcellular location is the cytoplasm. Component of ribonucleosomes, which are complexes of at least 20 other different heterogeneous nuclear ribonucleoproteins (hnRNP). hnRNP play an important role in processing of precursor mRNA in the nucleus. This is Heterogeneous nuclear ribonucleoprotein R (HNRNPR) from Homo sapiens (Human).